Reading from the N-terminus, the 253-residue chain is U2 small nuclear ribonucleoprotein A' (253 aa).

LRR repeat units lie at residues 19–40 (KDRE…GIAK), 41–62 (DQDA…PFFP), 63–84 (RLHT…IAST), and 87–108 (NLTT…DPLR). One can recognise an LRRCT domain in the interval 121–159 (NPVTRKEHYRYWVIWRIPSVRFLDYQKVKDAERAKAKEL). The segment at 228-253 (ELNEGRIPGGALDAGEDSEDENQMQT) is disordered. Acidic residues predominate over residues 241 to 253 (AGEDSEDENQMQT).

The protein belongs to the U2 small nuclear ribonucleoprotein A family. In terms of assembly, associated with the spliceosome.

The protein localises to the nucleus. Involved in pre-mRNA splicing. The protein is U2 small nuclear ribonucleoprotein A' (lea1) of Aspergillus fumigatus (strain ATCC MYA-4609 / CBS 101355 / FGSC A1100 / Af293) (Neosartorya fumigata).